Consider the following 466-residue polypeptide: Ribulose bisphosphate carboxylase large chain (466 aa).

Lys5 is subject to N6,N6,N6-trimethyllysine. Substrate contacts are provided by Asn114 and Thr164. Lys166 functions as the Proton acceptor in the catalytic mechanism. Lys168 is a binding site for substrate. Mg(2+)-binding residues include Lys192, Asp194, and Glu195. Position 192 is an N6-carboxylysine (Lys192). His285 (proton acceptor) is an active-site residue. Substrate-binding residues include Arg286, His318, and Ser370.

The protein belongs to the RuBisCO large chain family. Type I subfamily. As to quaternary structure, heterohexadecamer of 8 large chains and 8 small chains; disulfide-linked. The disulfide link is formed within the large subunit homodimers. Mg(2+) is required as a cofactor. Post-translationally, the disulfide bond which can form in the large chain dimeric partners within the hexadecamer appears to be associated with oxidative stress and protein turnover.

The protein resides in the plastid. It localises to the chloroplast. The catalysed reaction is 2 (2R)-3-phosphoglycerate + 2 H(+) = D-ribulose 1,5-bisphosphate + CO2 + H2O. It catalyses the reaction D-ribulose 1,5-bisphosphate + O2 = 2-phosphoglycolate + (2R)-3-phosphoglycerate + 2 H(+). In terms of biological role, ruBisCO catalyzes two reactions: the carboxylation of D-ribulose 1,5-bisphosphate, the primary event in carbon dioxide fixation, as well as the oxidative fragmentation of the pentose substrate in the photorespiration process. Both reactions occur simultaneously and in competition at the same active site. The chain is Ribulose bisphosphate carboxylase large chain from Betula nigra (River birch).